Here is a 732-residue protein sequence, read N- to C-terminus: uncharacterized protein (732 aa).

Helical transmembrane passes span 687–707 and 712–732; these read YLFP…GSDL and GVKV…YYTS.

Belongs to the FadG family.

Its subcellular location is the cell membrane. This is an uncharacterized protein from Bacillus subtilis (strain 168).